We begin with the raw amino-acid sequence, 1150 residues long: Protogenin (1150 aa).

A signal peptide spans 1–35 (MAPPLRPLARLRPPGMLLRALLLLLLLSPLPGVWC). 4 Ig-like domains span residues 36-130 (FSEL…AHLA), 135-222 (SAFE…ASLT), 235-322 (PTII…ATLT), and 327-411 (PSFV…ARLT). Residues 36-949 (FSELSFVKEP…YYHLDQKSMT (914 aa)) lie on the Extracellular side of the membrane. 4 disulfide bridges follow: Cys-60/Cys-113, Cys-156/Cys-205, Cys-256/Cys-304, and Cys-348/Cys-395. N-linked (GlcNAc...) asparagine glycosylation is present at Asn-90. Fibronectin type-III domains are found at residues 421–515 (APYN…TLED), 517–613 (PLRP…TPKA), 618–717 (APKS…VRDR), 724–817 (PPHH…TLPE), and 822–917 (PPVG…VLPK). A glycan (N-linked (GlcNAc...) asparagine) is linked at Asn-488. A glycan (N-linked (GlcNAc...) asparagine) is linked at Asn-630. A helical transmembrane segment spans residues 950-970 (GIAVGVGIALTCILICVLILI). Residues 971–1150 (YRSKARKSSA…SVISTTPPNL (180 aa)) are Cytoplasmic-facing. Disordered stretches follow at residues 981–1002 (SKTA…ASGN) and 1086–1150 (ISDE…PPNL). Composition is skewed to polar residues over residues 983-1000 (TAQN…SLAS) and 1092-1102 (PSSPGQTTSFS). Residues 1110–1138 (DTEHSANSEGSHETGDSGRFSHESNDEIH) show a composition bias toward basic and acidic residues. Positions 1141-1150 (SVISTTPPNL) are enriched in polar residues.

It belongs to the immunoglobulin superfamily. DCC family.

Its subcellular location is the membrane. In terms of biological role, may play a role in anteroposterior axis elongation. This is Protogenin from Homo sapiens (Human).